We begin with the raw amino-acid sequence, 2271 residues long: Serine-rich adhesin for platelets (2271 aa).

The N-terminal stretch at 1 to 89 (MSKRQKAFHD…VNMLHDQQAF (89 aa)) is a signal peptide. The interval 90–230 (AASDAPLTSE…KTSTTSTSTA (141 aa)) is serine-rich repeat region 1, SRR1. Polar residues predominate over residues 100 to 111 (LNTQSETVGNQN). Disordered stretches follow at residues 100-229 (LNTQ…STST), 751-791 (NSMS…VVST), and 806-2243 (SVSA…GLLG). The segment covering 112 to 128 (STTIEASTSTADSTSVT) has biased composition (low complexity). Residues 129 to 140 (KNSSSVQTSNSD) show a composition bias toward polar residues. A compositionally biased stretch (low complexity) spans 150 to 229 (VTSTTNSTSN…NKTSTTSTST (80 aa)). Residues 231-751 (PVKLRTFSRL…TTFKYEVTRN (521 aa)) form a non-repeat region (NRR) region. Low complexity-rich tracts occupy residues 752 to 791 (SMSDSVSTSGSTQQSQSVSTSKADSQSASTSTSGSIVVST), 806 to 1392 (SVSA…LSLS), and 1402 to 2214 (SNSA…ATSE). The tract at residues 752-2232 (SMSDSVSTSG…AQSEKRLPDT (1481 aa)) is serine-rich repeat region 2, SRR2. Positions 2229-2233 (LPDTG) match the LPXTG sorting signal motif. T2232 carries the post-translational modification Pentaglycyl murein peptidoglycan amidated threonine. The propeptide at 2233–2271 (GDSIKQNGLLGGVMTLLVGLGLMKRKKKKDENDQDDSQA) is removed by sortase.

Belongs to the serine-rich repeat protein (SRRP) family. In terms of processing, proteolytically cleaved by a metalloprotease. Glycosylated. It is probable that most of the Ser residues in SSR1 and SSR2 are O-GlcNAcylated. Sequential glycosylation by sugar transferases are able to generate complex sugar polymorphisms.

It is found in the secreted. The protein localises to the cell wall. Its function is as follows. Mediates binding to human platelets, possibly through a receptor-ligand interaction. Probably associated with virulence in endovascular infection. The sequence is that of Serine-rich adhesin for platelets (sraP) from Staphylococcus aureus (strain USA300).